We begin with the raw amino-acid sequence, 316 residues long: Pantothenate kinase (316 aa).

Residue 95 to 102 (GSVAVGKS) coordinates ATP.

The protein belongs to the prokaryotic pantothenate kinase family.

It is found in the cytoplasm. It catalyses the reaction (R)-pantothenate + ATP = (R)-4'-phosphopantothenate + ADP + H(+). Its pathway is cofactor biosynthesis; coenzyme A biosynthesis; CoA from (R)-pantothenate: step 1/5. The sequence is that of Pantothenate kinase from Shewanella putrefaciens (strain CN-32 / ATCC BAA-453).